The sequence spans 445 residues: Xylose isomerase (445 aa).

Active-site residues include His109 and Asp112. Mg(2+) is bound by residues Glu240, Glu276, His279, Asp304, Asp315, Asp317, and Asp347.

Belongs to the xylose isomerase family. Homotetramer. Mg(2+) serves as cofactor.

The protein localises to the cytoplasm. The enzyme catalyses alpha-D-xylose = alpha-D-xylulofuranose. This is Xylose isomerase from Xanthomonas oryzae pv. oryzae (strain MAFF 311018).